The following is a 477-amino-acid chain: Cytochrome b mRNA maturase bI3 (477 aa).

The tract at residues 1–163 (MRLLKSHPLL…IPWIGQDIVE (163 aa)) is cytochrome b. Helical transmembrane passes span 32–52 (FGSLLACCLIIQIVTGVTLAM), 86–106 (ASAFFFLVYLHIGRGMYYGSY), 113–133 (VWAIGTVILILMMATAFLGYV), 142–162 (WGATVITNLISAIPWIGQDIV), and 166–186 (IITLIINLSFIAILFSIVVVY). Residues 164-477 (SKIITLIINL…YSTLNYPDAK (314 aa)) form a maturase region.

This sequence in the N-terminal section; belongs to the cytochrome b family. It in the C-terminal section; belongs to the LAGLIDADG endonuclease family.

It localises to the mitochondrion inner membrane. Its function is as follows. Mitochondrial mRNA maturase required for splicing of intron 3 of the cytochrome b (cob) gene, containing its own coding sequence. In Neurospora crassa (strain ATCC 24698 / 74-OR23-1A / CBS 708.71 / DSM 1257 / FGSC 987), this protein is Cytochrome b mRNA maturase bI3 (bI3).